We begin with the raw amino-acid sequence, 400 residues long: NADH dehydrogenase-like protein MT1860 (400 aa).

Belongs to the NADH dehydrogenase family. FAD serves as cofactor.

The polypeptide is NADH dehydrogenase-like protein MT1860 (Mycobacterium tuberculosis (strain CDC 1551 / Oshkosh)).